The primary structure comprises 458 residues: MNFPTIPHESNVVSINVGGRIFQTTKQTLSLAGTDSLLSQLATETTRFVDRDPDLFSVLLYILRTGNLPARSRAFDVRDLIDESRYYGIESFLIDSLSNSSQFEPFDLRRSRILQLNGRDSPSSISPTVIGGGLHVAHGSKITSFDWSLRQKSTVLTNFSAVDSLLEISPGVLAAGATDFPGLQIIDLDNGGFVRTTLNWENVTRSSSTVQAIGSSHEFLFTSFESSRRNSNSIMVYDLSSLLPVSEIDHCEIYGADIDSAIPSTKLKWIQSCNLLMVSGSHTSPSGVNGHIRFWDVRSRNMVWEIKEAQDCFSDVTVSDNLSAVFKVGVTSGEVFYADLRSLGTKDPWVCLGEEKKRNLNERRGVGSKIESYGNHVFCSSKGSGIELWSEVITGLVGNASRDVLEERVFRKNSLGKLADSGENKITGLAFGGNRMFVTRKDQQSVQVWQSPSRGISI.

The 62-residue stretch at 11–72 (NVVSINVGGR…LRTGNLPARS (62 aa)) folds into the BTB domain. 3 WD repeats span residues 259–305 (DSAI…MVWE), 360–399 (LNER…LVGN), and 421–458 (SGEN…GISI).

It functions in the pathway protein modification; protein ubiquitination. Functionally, may act as a substrate-specific adapter of an E3 ubiquitin-protein ligase complex (CUL3-RBX1-BTB) which mediates the ubiquitination and subsequent proteasomal degradation of target proteins. In Arabidopsis thaliana (Mouse-ear cress), this protein is BTB/POZ domain-containing protein At5g41330.